Here is a 1014-residue protein sequence, read N- to C-terminus: Protein argonaute 2 (1014 aa).

Basic and acidic residues predominate over residues M1–G15. Residues M1–E137 are disordered. Composition is skewed to gly residues over residues G18 to E29 and R49 to R58. The span at Q83–G104 shows a compositional bias: low complexity. Over residues S105–A114 the composition is skewed to gly residues. Over residues V121–E137 the composition is skewed to low complexity. One can recognise a PAZ domain in the interval S369–E482. The 300-residue stretch at L666–E965 folds into the Piwi domain. 3 interaction with guide RNA regions span residues K857–R858, H900–K908, and F937–R959.

Belongs to the argonaute family. Ago subfamily. As to quaternary structure, interacts with NERD.

In terms of biological role, involved in RNA-mediated post-transcriptional gene silencing (PTGS). Main component of the RNA-induced silencing complex (RISC) that binds to a short guide RNA such as microRNA (miRNA) or small interfering RNA (siRNA). RISC uses the mature miRNA or siRNA as a guide for slicer-directed cleavage of homologous mRNAs to repress gene expression. Associates mainly with siRNAs of 21 nucleotide in length and preferentially recruits small RNAs with a 5' terminal adenosine. Probably involved in antiviral RNA silencing. Associates with siRNA derived from cucumber mosaic virus (CMV). Targeted by turnip yellows virus (TuYV) protein P0 (via F-box-like domain) for probable proteasome degradation and thereby inactivating AGO2 function in RNA silencing. Required to direct NERD-dependent DNA methylation and silencing. This chain is Protein argonaute 2 (AGO2), found in Arabidopsis thaliana (Mouse-ear cress).